We begin with the raw amino-acid sequence, 148 residues long: Large ribosomal subunit protein uL15 (148 aa).

Positions 1 to 28 (MIRRRKKVRKLRGSHTHGWGCKKKHRGG) are enriched in basic residues. The segment at 1–43 (MIRRRKKVRKLRGSHTHGWGCKKKHRGGGSKGGRGMAGTGKRK) is disordered. A compositionally biased stretch (gly residues) spans 29-38 (GSKGGRGMAG).

The protein belongs to the universal ribosomal protein uL15 family. Part of the 50S ribosomal subunit.

Its function is as follows. Binds to the 23S rRNA. This chain is Large ribosomal subunit protein uL15, found in Thermococcus kodakarensis (strain ATCC BAA-918 / JCM 12380 / KOD1) (Pyrococcus kodakaraensis (strain KOD1)).